Consider the following 1040-residue polypeptide: Multidrug resistance protein MdtB (1040 aa).

Transmembrane regions (helical) follow at residues F16–I36, L347–A367, I369–L389, L396–I416, I440–F460, F472–P492, W537–I557, L863–I883, F888–A908, I911–V931, I968–V988, and I998–I1018.

The protein belongs to the resistance-nodulation-cell division (RND) (TC 2.A.6) family. MdtB subfamily. Part of a tripartite efflux system composed of MdtA, MdtB and MdtC. MdtB forms a heteromultimer with MdtC.

Its subcellular location is the cell inner membrane. Its function is as follows. The MdtABC tripartite complex confers resistance against novobiocin and deoxycholate. The protein is Multidrug resistance protein MdtB of Escherichia coli O139:H28 (strain E24377A / ETEC).